The chain runs to 184 residues: MILMKDIVRDGDPVLRQVAQKLTFPLSDHYRKLADDMMEYLVNSQDPKIAAKHQLRAGVGLAAPQVGEGVSMAALLVPDDKGEIIFKEVYVNPEIISESVRKTCLSEGEGCLSVDKVIDGYVPRPNKVTVHYWTVDGEEKTIRLKGYPAIVSGHEIDHLNGHLFYDRINKENPFALDEDTIVIY.

Fe cation is bound by residues C111 and H154. E155 is an active-site residue. Residue H158 coordinates Fe cation.

This sequence belongs to the polypeptide deformylase family. It depends on Fe(2+) as a cofactor.

It catalyses the reaction N-terminal N-formyl-L-methionyl-[peptide] + H2O = N-terminal L-methionyl-[peptide] + formate. Functionally, removes the formyl group from the N-terminal Met of newly synthesized proteins. Requires at least a dipeptide for an efficient rate of reaction. N-terminal L-methionine is a prerequisite for activity but the enzyme has broad specificity at other positions. This Lactobacillus delbrueckii subsp. bulgaricus (strain ATCC 11842 / DSM 20081 / BCRC 10696 / JCM 1002 / NBRC 13953 / NCIMB 11778 / NCTC 12712 / WDCM 00102 / Lb 14) protein is Peptide deformylase.